We begin with the raw amino-acid sequence, 120 residues long: NAD(P)H-quinone oxidoreductase subunit 3 (120 aa).

3 helical membrane-spanning segments follow: residues Gly-6 to Thr-26, Met-64 to Val-84, and Leu-89 to Ala-109.

It belongs to the complex I subunit 3 family. As to quaternary structure, NDH-1 can be composed of about 15 different subunits; different subcomplexes with different compositions have been identified which probably have different functions.

It is found in the cellular thylakoid membrane. The enzyme catalyses a plastoquinone + NADH + (n+1) H(+)(in) = a plastoquinol + NAD(+) + n H(+)(out). The catalysed reaction is a plastoquinone + NADPH + (n+1) H(+)(in) = a plastoquinol + NADP(+) + n H(+)(out). NDH-1 shuttles electrons from an unknown electron donor, via FMN and iron-sulfur (Fe-S) centers, to quinones in the respiratory and/or the photosynthetic chain. The immediate electron acceptor for the enzyme in this species is believed to be plastoquinone. Couples the redox reaction to proton translocation, and thus conserves the redox energy in a proton gradient. Cyanobacterial NDH-1 also plays a role in inorganic carbon-concentration. This chain is NAD(P)H-quinone oxidoreductase subunit 3, found in Prochlorococcus marinus (strain NATL1A).